We begin with the raw amino-acid sequence, 987 residues long: Vacuolar membrane protease (987 aa).

Over 1–14 (MATRKARNPLAFMP) the chain is Cytoplasmic. A helical membrane pass occupies residues 15–35 (WPVTILTTAMYLALIIPLLVI). The Vacuolar portion of the chain corresponds to 36–384 (HHNVPPAPRT…AFAVFRLHTL (349 aa)). N-linked (GlcNAc...) asparagine glycosylation is found at Asn51 and Asn117. Zn(2+) is bound by residues His167 and Asp179. Glu213 serves as the catalytic Proton acceptor. The Zn(2+) site is built by Glu214, Glu239, and His312. The chain crosses the membrane as a helical span at residues 385-405 (FALSVTLLIVAPLTLLVTSVI). Residues 406-435 (LSRADKMYLFRSSVYSEINDDYIPLRGLRG) are Cytoplasmic-facing. A helical membrane pass occupies residues 436-456 (FFRFPFLISIPTGVTVGLAYM). Topologically, residues 457-466 (VTKVNPFIAH) are vacuolar. Residues 467–487 (SSSYAVWSMMISAWIFLAWFV) traverse the membrane as a helical segment. Residues 488-501 (SRVANSARPSAFHR) are Cytoplasmic-facing. The chain crosses the membrane as a helical span at residues 502 to 522 (VYTWTWMFVLTWSLMVVCTVY). Topologically, residues 523–526 (EHEE) are vacuolar. A helical transmembrane segment spans residues 527–547 (GLAGGYFIFFYFAGTFLATWI). Over 548–649 (SYLELFALPT…WSGVLPRWTW (102 aa)) the chain is Cytoplasmic. A disordered region spans residues 572-600 (STQGSRLAASGDEHQDDAAEEDPTESTSL). A helical membrane pass occupies residues 650–670 (LLQLLITAPVILMLIVPLALL). At 671–686 (TTSALSQTGQDGSPQL) the chain is on the vacuolar side. Residues 687–707 (LIYLFISCLTALLFAPMLPFI) traverse the membrane as a helical segment. The Cytoplasmic portion of the chain corresponds to 708–715 (HRYTYHLP). Residues 716-736 (IFLLFVFIGTMIYNLVAFPFA) form a helical membrane-spanning segment. Residues 737–987 (DSNRLKLFFL…KRSSLGALGS (251 aa)) are Vacuolar-facing. Residues Asn781 and Asn871 are each glycosylated (N-linked (GlcNAc...) asparagine).

Belongs to the peptidase M28 family. Zn(2+) serves as cofactor.

It localises to the vacuole membrane. Functionally, may be involved in vacuolar sorting and osmoregulation. This chain is Vacuolar membrane protease, found in Penicillium rubens (strain ATCC 28089 / DSM 1075 / NRRL 1951 / Wisconsin 54-1255) (Penicillium chrysogenum).